We begin with the raw amino-acid sequence, 63 residues long: Hypoxia-inducible lipid droplet-associated protein (63 aa).

Positions 1–37 are required for targeting to lipid droplets; it reads MKHVLNLYLLGVVLTLLSIFVRVMESLEGLLESPSPG. A helical transmembrane segment spans residues 7–23; sequence LYLLGVVLTLLSIFVRV. The disordered stretch occupies residues 31 to 63; the sequence is LESPSPGTSWTTRSQLANTEPTKGLPDHPSRSM. Over residues 35–51 the composition is skewed to polar residues; the sequence is SPGTSWTTRSQLANTEP. Ser-44 bears the Phosphoserine mark.

As to expression, highly expressed in renal cell carcinoma cells but barely detectable in adjacent normal kidney tissue. Detected in some cervical and endometrial cancers. Expression also detected in fetal kidney with little or no expression observed in normal adult heart, liver, lung, pancreas, prostate or spinal cord (at protein level).

The protein localises to the lipid droplet. It localises to the secreted. Its subcellular location is the membrane. In terms of biological role, increases intracellular lipid accumulation. Stimulates expression of cytokines including IL6, MIF and VEGFA. Enhances cell growth and proliferation. In Homo sapiens (Human), this protein is Hypoxia-inducible lipid droplet-associated protein (HILPDA).